We begin with the raw amino-acid sequence, 336 residues long: Quinolinate synthase (336 aa).

Iminosuccinate is bound by residues histidine 25 and serine 42. Residue cysteine 86 coordinates [4Fe-4S] cluster. Residues 117 to 119 (YIN) and serine 138 contribute to the iminosuccinate site. Residue cysteine 198 coordinates [4Fe-4S] cluster. Residues 224–226 (HPE) and threonine 241 contribute to the iminosuccinate site. Cysteine 288 contacts [4Fe-4S] cluster.

The protein belongs to the quinolinate synthase family. Type 3 subfamily. Requires [4Fe-4S] cluster as cofactor.

The protein localises to the cytoplasm. The catalysed reaction is iminosuccinate + dihydroxyacetone phosphate = quinolinate + phosphate + 2 H2O + H(+). It participates in cofactor biosynthesis; NAD(+) biosynthesis; quinolinate from iminoaspartate: step 1/1. In terms of biological role, catalyzes the condensation of iminoaspartate with dihydroxyacetone phosphate to form quinolinate. The sequence is that of Quinolinate synthase from Helicobacter pylori (strain ATCC 700392 / 26695) (Campylobacter pylori).